We begin with the raw amino-acid sequence, 391 residues long: MSRFLICSFALVLLYPAGIDMYLVGLPRIAADLNASEAQLHIAFSVYLAGMAAAMLFAGKVADRSGRKPVAIPGAALFIIASVFCSLAETSALFLAGRFLQGLGAGCCYVVAFAILRDTLDDRRRAKVLSLLNGITCIIPVLAPVLGHLIMLKFPWQSLFWTMATMGIAVLMLSLFILKETRPAAPTTSDKPRENSESLLNRFFLSRVVITTLSVSVILTFVNTSPVLLMEIMGFERGEYATIMALTAGVSMTVSFSTPFALGIFKPRTLMITSQVLFLAAGITLAVSPSHAVSLFGITLICAGFSVGFGVAMSQALGPFSLRAGVASSTLGIAQVCGSSLWIWLAAVVGIGAWNMLIGILIACSIVSLLLIMFVAPGRPVAAHEEIHHHA.

Transmembrane regions (helical) follow at residues Phe-4 to Val-24, Ile-42 to Ala-62, Pro-69 to Glu-89, Leu-93 to Phe-113, Leu-131 to Met-151, Ser-158 to Leu-178, Phe-203 to Val-222, Ala-245 to Phe-265, Thr-269 to Pro-289, Val-293 to Met-313, Leu-331 to Ile-351, and Met-356 to Ala-376.

It belongs to the major facilitator superfamily. DHA1 family. MdtL (TC 2.A.1.2.22) subfamily.

It is found in the cell inner membrane. Its function is as follows. Confers resistance to chloramphenicol. In Escherichia coli O127:H6 (strain E2348/69 / EPEC), this protein is Multidrug resistance protein MdtL.